Consider the following 171-residue polypeptide: ATP synthase subunit b (171 aa).

A helical membrane pass occupies residues 24-44; sequence INLVIVIGVLYWFLKGFLGGI.

Belongs to the ATPase B chain family. As to quaternary structure, F-type ATPases have 2 components, F(1) - the catalytic core - and F(0) - the membrane proton channel. F(1) has five subunits: alpha(3), beta(3), gamma(1), delta(1), epsilon(1). F(0) has four main subunits: a(1), b(1), b'(1) and c(10-14). The alpha and beta chains form an alternating ring which encloses part of the gamma chain. F(1) is attached to F(0) by a central stalk formed by the gamma and epsilon chains, while a peripheral stalk is formed by the delta, b and b' chains.

It is found in the cellular thylakoid membrane. Functionally, f(1)F(0) ATP synthase produces ATP from ADP in the presence of a proton or sodium gradient. F-type ATPases consist of two structural domains, F(1) containing the extramembraneous catalytic core and F(0) containing the membrane proton channel, linked together by a central stalk and a peripheral stalk. During catalysis, ATP synthesis in the catalytic domain of F(1) is coupled via a rotary mechanism of the central stalk subunits to proton translocation. Its function is as follows. Component of the F(0) channel, it forms part of the peripheral stalk, linking F(1) to F(0). The protein is ATP synthase subunit b of Synechococcus sp. (strain WH7803).